The sequence spans 477 residues: Proton extrusion protein PxcA (477 aa).

3 helical membrane passes run 239 to 259, 354 to 374, and 437 to 457; these read FILL…ITFV, GIKN…IIST, and FNFL…KYWI.

This sequence belongs to the CemA family.

The protein resides in the cell inner membrane. Its function is as follows. Required for H(+) efflux immediately after light irradiation to form a rapid H(+) concentration gradient across the thylakoid membranes. Together with PxcL, contributes to transient H(+) uptake following dark to light transition. The protein is Proton extrusion protein PxcA of Trichodesmium erythraeum (strain IMS101).